The sequence spans 309 residues: Ribonuclease Z (309 aa).

Zn(2+) is bound by residues His-63, His-65, Asp-67, His-68, His-143, Asp-213, and His-271. Asp-67 (proton acceptor) is an active-site residue.

Belongs to the RNase Z family. Homodimer. It depends on Zn(2+) as a cofactor.

It catalyses the reaction Endonucleolytic cleavage of RNA, removing extra 3' nucleotides from tRNA precursor, generating 3' termini of tRNAs. A 3'-hydroxy group is left at the tRNA terminus and a 5'-phosphoryl group is left at the trailer molecule.. In terms of biological role, zinc phosphodiesterase, which displays some tRNA 3'-processing endonuclease activity. Probably involved in tRNA maturation, by removing a 3'-trailer from precursor tRNA. The chain is Ribonuclease Z from Phocaeicola vulgatus (strain ATCC 8482 / DSM 1447 / JCM 5826 / CCUG 4940 / NBRC 14291 / NCTC 11154) (Bacteroides vulgatus).